Here is a 687-residue protein sequence, read N- to C-terminus: Glycine--tRNA ligase beta subunit (687 aa).

It belongs to the class-II aminoacyl-tRNA synthetase family. As to quaternary structure, tetramer of two alpha and two beta subunits.

Its subcellular location is the cytoplasm. The enzyme catalyses tRNA(Gly) + glycine + ATP = glycyl-tRNA(Gly) + AMP + diphosphate. The polypeptide is Glycine--tRNA ligase beta subunit (Neisseria meningitidis serogroup C (strain 053442)).